The following is a 113-amino-acid chain: MAKIKKDDLVQVISGKDKGKQGKVLRVFPTDERVLVEGVNRVTKHLRAGQDNNGSTEGGLQVVEAPIHISNVAVVDPETKKPTRVGYRFETVEKDGVTKTVKVRFAKASGKEL.

The protein belongs to the universal ribosomal protein uL24 family. As to quaternary structure, part of the 50S ribosomal subunit.

Functionally, one of two assembly initiator proteins, it binds directly to the 5'-end of the 23S rRNA, where it nucleates assembly of the 50S subunit. In terms of biological role, one of the proteins that surrounds the polypeptide exit tunnel on the outside of the subunit. The protein is Large ribosomal subunit protein uL24 of Micrococcus luteus (Micrococcus lysodeikticus).